A 344-amino-acid chain; its full sequence is Aurora kinase B (344 aa).

A disordered region spans residues 1 to 22; that stretch reads MAQKENSYPWPYGRQTAPSGLS. Phosphothreonine is present on Thr35. Position 62 is a phosphoserine (Ser62). Thr64 is subject to Phosphothreonine. Residues 77–327 form the Protein kinase domain; it reads FEIGRPLGKG…LAQVSAHPWV (251 aa). Residues 83–91 and Lys106 contribute to the ATP site; that span reads LGKGKFGNV. Asp200 acts as the Proton acceptor in catalysis. The residue at position 215 (Lys215) is an N6-acetyllysine. Position 227 is a phosphoserine (Ser227). Thr232 is subject to Phosphothreonine; by autocatalysis.

It belongs to the protein kinase superfamily. Ser/Thr protein kinase family. Aurora subfamily. As to quaternary structure, component of the chromosomal passenger complex (CPC) composed of at least BIRC5/survivin, CDCA8/borealin, INCENP, AURKB or AURKC; predominantly independent AURKB- and AURKC-containing complexes exist. Associates with RACGAP1 during M phase. Interacts with SPDYC; this interaction may be required for proper localization of active, Thr-232-phosphorylated AURKB form during prometaphase and metaphase. Interacts with p53/TP53. Interacts (via the middle kinase domain) with NOC2L (via the N- and C-terminus domains). Interacts with CDCA1. Interacts with EVI5. Interacts with JTB. Interacts with NDC80. Interacts with PSMA3. Interacts with RNF2/RING1B. Interacts with SEPTIN1. Interacts with SIRT2. Interacts with TACC1. Interacts with TTC28. In terms of processing, the phosphorylation of Thr-232 requires the binding to INCENP and occurs by means of an autophosphorylation mechanism. Thr-232 phosphorylation is indispensable for the AURKB kinase activity. Post-translationally, acetylated at Lys-215 by KAT5 at kinetochores, increasing AURKB activity and promoting accurate chromosome segregation in mitosis. Ubiquitinated by different BCR (BTB-CUL3-RBX1) E3 ubiquitin ligase complexes. Ubiquitinated by the BCR(KLHL9-KLHL13) E3 ubiquitin ligase complex, ubiquitination leads to removal from mitotic chromosomes and is required for cytokinesis. During anaphase, the BCR(KLHL21) E3 ubiquitin ligase complex recruits the CPC complex from chromosomes to the spindle midzone and mediates the ubiquitination of AURKB. Ubiquitination of AURKB by BCR(KLHL21) E3 ubiquitin ligase complex may not lead to its degradation by the proteasome. Deubiquitinated by USP35; inhibiting CDH1-mediated degradation of AURKB. High level expression seen in the thymus. It is also expressed in the spleen, lung, testis, colon, placenta and fetal liver. Expressed during S and G2/M phase and expression is up-regulated in cancer cells during M phase. As to expression, not expressed in normal liver, high expression in metastatic liver.

Its subcellular location is the nucleus. It localises to the chromosome. It is found in the centromere. The protein localises to the kinetochore. The protein resides in the cytoplasm. Its subcellular location is the cytoskeleton. It localises to the spindle. It is found in the midbody. The enzyme catalyses L-seryl-[protein] + ATP = O-phospho-L-seryl-[protein] + ADP + H(+). It carries out the reaction L-threonyl-[protein] + ATP = O-phospho-L-threonyl-[protein] + ADP + H(+). Its activity is regulated as follows. Activity is greatly increased when AURKB is within the CPC complex. In particular, AURKB-phosphorylated INCENP acts as an activator of AURKB. Positive feedback between HASPIN and AURKB contributes to CPC localization. Inhibited by ZM447439. Functionally, serine/threonine-protein kinase component of the chromosomal passenger complex (CPC), a complex that acts as a key regulator of mitosis. The CPC complex has essential functions at the centromere in ensuring correct chromosome alignment and segregation and is required for chromatin-induced microtubule stabilization and spindle assembly. Involved in the bipolar attachment of spindle microtubules to kinetochores and is a key regulator for the onset of cytokinesis during mitosis. Required for central/midzone spindle assembly and cleavage furrow formation. Key component of the cytokinesis checkpoint, a process required to delay abscission to prevent both premature resolution of intercellular chromosome bridges and accumulation of DNA damage: phosphorylates CHMP4C, leading to retain abscission-competent VPS4 (VPS4A and/or VPS4B) at the midbody ring until abscission checkpoint signaling is terminated at late cytokinesis. AURKB phosphorylates the CPC complex subunits BIRC5/survivin, CDCA8/borealin and INCENP. Phosphorylation of INCENP leads to increased AURKB activity. Other known AURKB substrates involved in centromeric functions and mitosis are CENPA, DES/desmin, GPAF, KIF2C, NSUN2, RACGAP1, SEPTIN1, VIM/vimentin, HASPIN, and histone H3. A positive feedback loop involving HASPIN and AURKB contributes to localization of CPC to centromeres. Phosphorylation of VIM controls vimentin filament segregation in cytokinetic process, whereas histone H3 is phosphorylated at 'Ser-10' and 'Ser-28' during mitosis (H3S10ph and H3S28ph, respectively). AURKB is also required for kinetochore localization of BUB1 and SGO1. Phosphorylation of p53/TP53 negatively regulates its transcriptional activity. Key regulator of active promoters in resting B- and T-lymphocytes: acts by mediating phosphorylation of H3S28ph at active promoters in resting B-cells, inhibiting RNF2/RING1B-mediated ubiquitination of histone H2A and enhancing binding and activity of the USP16 deubiquitinase at transcribed genes. Acts as an inhibitor of CGAS during mitosis: catalyzes phosphorylation of the N-terminus of CGAS during the G2-M transition, blocking CGAS liquid phase separation and activation, and thereby preventing CGAS-induced autoimmunity. Phosphorylates KRT5 during anaphase and telophase. Phosphorylates ATXN10 which promotes phosphorylation of ATXN10 by PLK1 and may play a role in the regulation of cytokinesis and stimulating the proteasomal degradation of ATXN10. In Homo sapiens (Human), this protein is Aurora kinase B (AURKB).